The sequence spans 376 residues: MRAFLALEDGFVLEGRSFTGRGESGGEVIFNTGMTGYQEVLTDPSYAGQMVCMTYPLIGNYGVTAEDMESGKVHVEAFIVKECCRTPSNWRAIMSLPDYLAQHGVMGIEGIDTRALTRHLRINGAMRGIISTETDDRDELVRRARALPTMEGQNLVTRVAPATPYRWDGTRPQPVQLAADGAYAWPGTGPRLVVYDYGIKWNILRLLTDQGFDLLVVPPSFTAMQVAASGAEAVFLSNGPGDPATLTDEVREIRVMTERMPVAGICLGHQLLGHALGGTTHKLKFGHHGCNHPVKDLVTGHIEISSQNHGFCVDIESVPDVEITHVNLNDGTLEGFAHKTRPILAVQHHPEASPGPTDSRYFFARFRGMVREAVGR.

The segment at 1-187 (MRAFLALEDG…AADGAYAWPG (187 aa)) is CPSase. Residues Ser45, Gly239, and Gly241 each contribute to the L-glutamine site. Residues 191 to 376 (RLVVYDYGIK…RGMVREAVGR (186 aa)) enclose the Glutamine amidotransferase type-1 domain. The Nucleophile role is filled by Cys266. Residues Leu267, Gln270, Asn308, Gly310, and Phe311 each coordinate L-glutamine. Residues His349 and Glu351 contribute to the active site.

Belongs to the CarA family. As to quaternary structure, composed of two chains; the small (or glutamine) chain promotes the hydrolysis of glutamine to ammonia, which is used by the large (or ammonia) chain to synthesize carbamoyl phosphate. Tetramer of heterodimers (alpha,beta)4.

The enzyme catalyses hydrogencarbonate + L-glutamine + 2 ATP + H2O = carbamoyl phosphate + L-glutamate + 2 ADP + phosphate + 2 H(+). It carries out the reaction L-glutamine + H2O = L-glutamate + NH4(+). Its pathway is amino-acid biosynthesis; L-arginine biosynthesis; carbamoyl phosphate from bicarbonate: step 1/1. The protein operates within pyrimidine metabolism; UMP biosynthesis via de novo pathway; (S)-dihydroorotate from bicarbonate: step 1/3. In terms of biological role, small subunit of the glutamine-dependent carbamoyl phosphate synthetase (CPSase). CPSase catalyzes the formation of carbamoyl phosphate from the ammonia moiety of glutamine, carbonate, and phosphate donated by ATP, constituting the first step of 2 biosynthetic pathways, one leading to arginine and/or urea and the other to pyrimidine nucleotides. The small subunit (glutamine amidotransferase) binds and cleaves glutamine to supply the large subunit with the substrate ammonia. This Nitratidesulfovibrio vulgaris (strain DSM 19637 / Miyazaki F) (Desulfovibrio vulgaris) protein is Carbamoyl phosphate synthase small chain.